We begin with the raw amino-acid sequence, 475 residues long: Ribulose bisphosphate carboxylase large chain (475 aa).

A propeptide spanning residues 1–2 (MS) is cleaved from the precursor. P3 carries the N-acetylproline modification. Residue K14 is modified to N6,N6,N6-trimethyllysine. The substrate site is built by N123 and T173. The active-site Proton acceptor is K175. K177 contributes to the substrate binding site. 3 residues coordinate Mg(2+): K201, D203, and E204. K201 carries the post-translational modification N6-carboxylysine. H294 acts as the Proton acceptor in catalysis. The substrate site is built by R295, H327, and S379.

It belongs to the RuBisCO large chain family. Type I subfamily. As to quaternary structure, heterohexadecamer of 8 large chains and 8 small chains; disulfide-linked. The disulfide link is formed within the large subunit homodimers. Mg(2+) is required as a cofactor. The disulfide bond which can form in the large chain dimeric partners within the hexadecamer appears to be associated with oxidative stress and protein turnover.

The protein resides in the plastid. The protein localises to the chloroplast. It catalyses the reaction 2 (2R)-3-phosphoglycerate + 2 H(+) = D-ribulose 1,5-bisphosphate + CO2 + H2O. The enzyme catalyses D-ribulose 1,5-bisphosphate + O2 = 2-phosphoglycolate + (2R)-3-phosphoglycerate + 2 H(+). Its function is as follows. RuBisCO catalyzes two reactions: the carboxylation of D-ribulose 1,5-bisphosphate, the primary event in carbon dioxide fixation, as well as the oxidative fragmentation of the pentose substrate in the photorespiration process. Both reactions occur simultaneously and in competition at the same active site. The chain is Ribulose bisphosphate carboxylase large chain from Buxus microphylla (Littleleaf boxwood).